We begin with the raw amino-acid sequence, 328 residues long: tRNA dimethylallyltransferase (328 aa).

23-30 provides a ligand contact to ATP; it reads GPTASGKS. 25 to 30 is a binding site for substrate; sequence TASGKS. Residues 48–51 are interaction with substrate tRNA; that stretch reads DSMQ.

The protein belongs to the IPP transferase family. In terms of assembly, monomer. The cofactor is Mg(2+).

It catalyses the reaction adenosine(37) in tRNA + dimethylallyl diphosphate = N(6)-dimethylallyladenosine(37) in tRNA + diphosphate. Catalyzes the transfer of a dimethylallyl group onto the adenine at position 37 in tRNAs that read codons beginning with uridine, leading to the formation of N6-(dimethylallyl)adenosine (i(6)A). In Rhodopseudomonas palustris (strain BisA53), this protein is tRNA dimethylallyltransferase.